The following is a 243-amino-acid chain: NH(3)-dependent NAD(+) synthetase (243 aa).

31–38 (GVSGGIDS) is an ATP binding site. A Mg(2+)-binding site is contributed by D37. R110 is a binding site for deamido-NAD(+). T130 contacts ATP. E135 contributes to the Mg(2+) binding site. Deamido-NAD(+) contacts are provided by K143 and D150. Positions 159 and 181 each coordinate ATP. 227 to 228 (HK) is a binding site for deamido-NAD(+).

The protein belongs to the NAD synthetase family. Homodimer.

It carries out the reaction deamido-NAD(+) + NH4(+) + ATP = AMP + diphosphate + NAD(+) + H(+). It participates in cofactor biosynthesis; NAD(+) biosynthesis; NAD(+) from deamido-NAD(+) (ammonia route): step 1/1. Its function is as follows. Catalyzes the ATP-dependent amidation of deamido-NAD to form NAD. Uses ammonia as a nitrogen source. The polypeptide is NH(3)-dependent NAD(+) synthetase (Malacoplasma penetrans (strain HF-2) (Mycoplasma penetrans)).